A 463-amino-acid chain; its full sequence is Fumarate hydratase class II (463 aa).

Substrate is bound by residues 97–99, 128–131, 138–140, and threonine 186; these read SGT, HPND, and SSN. The active-site Proton donor/acceptor is histidine 187. Residue serine 317 is part of the active site. Substrate-binding positions include serine 318 and 323 to 325; that span reads KVN.

Belongs to the class-II fumarase/aspartase family. Fumarase subfamily. In terms of assembly, homotetramer.

The protein localises to the cytoplasm. It catalyses the reaction (S)-malate = fumarate + H2O. The protein operates within carbohydrate metabolism; tricarboxylic acid cycle; (S)-malate from fumarate: step 1/1. Involved in the TCA cycle. Catalyzes the stereospecific interconversion of fumarate to L-malate. The protein is Fumarate hydratase class II of Helicobacter pylori (strain ATCC 700392 / 26695) (Campylobacter pylori).